Here is a 302-residue protein sequence, read N- to C-terminus: Sulfate adenylyltransferase subunit 2 (302 aa).

The protein belongs to the PAPS reductase family. CysD subfamily. Heterodimer composed of CysD, the smaller subunit, and CysN.

The catalysed reaction is sulfate + ATP + H(+) = adenosine 5'-phosphosulfate + diphosphate. It participates in sulfur metabolism; hydrogen sulfide biosynthesis; sulfite from sulfate: step 1/3. Functionally, with CysN forms the ATP sulfurylase (ATPS) that catalyzes the adenylation of sulfate producing adenosine 5'-phosphosulfate (APS) and diphosphate, the first enzymatic step in sulfur assimilation pathway. APS synthesis involves the formation of a high-energy phosphoric-sulfuric acid anhydride bond driven by GTP hydrolysis by CysN coupled to ATP hydrolysis by CysD. The polypeptide is Sulfate adenylyltransferase subunit 2 (Shewanella pealeana (strain ATCC 700345 / ANG-SQ1)).